A 348-amino-acid polypeptide reads, in one-letter code: Phenylalanine--tRNA ligase alpha subunit (348 aa).

Mg(2+) is bound at residue Glu-262.

Belongs to the class-II aminoacyl-tRNA synthetase family. Phe-tRNA synthetase alpha subunit type 1 subfamily. Tetramer of two alpha and two beta subunits. The cofactor is Mg(2+).

Its subcellular location is the cytoplasm. It catalyses the reaction tRNA(Phe) + L-phenylalanine + ATP = L-phenylalanyl-tRNA(Phe) + AMP + diphosphate + H(+). In Streptococcus pneumoniae (strain JJA), this protein is Phenylalanine--tRNA ligase alpha subunit.